The sequence spans 491 residues: Cobyric acid synthase (491 aa).

One can recognise a GATase cobBQ-type domain in the interval 258-445 (ALKVAVPVLG…MHGLFGADAF (188 aa)). The active-site Nucleophile is the C340. Residue H437 is part of the active site.

Belongs to the CobB/CobQ family. CobQ subfamily.

It participates in cofactor biosynthesis; adenosylcobalamin biosynthesis. Functionally, catalyzes amidations at positions B, D, E, and G on adenosylcobyrinic A,C-diamide. NH(2) groups are provided by glutamine, and one molecule of ATP is hydrogenolyzed for each amidation. The polypeptide is Cobyric acid synthase (Mesorhizobium japonicum (strain LMG 29417 / CECT 9101 / MAFF 303099) (Mesorhizobium loti (strain MAFF 303099))).